We begin with the raw amino-acid sequence, 78 residues long: Spermatid-specific protein T1 (78 aa).

The interval Met-1–Gly-21 is hydrophobic. Residues Met-1–Arg-78 are disordered. The segment covering Gly-20–Arg-78 has biased composition (basic residues).

In terms of processing, phosphorylation occurs at different degrees. The triphosphorylated form may be predominant in T1. SP1 appears to be phosphorylated in elongated spermatids, but dephosphorylated in mature sperm cells. In terms of tissue distribution, testis.

The protein localises to the nucleus. It localises to the chromosome. Its function is as follows. Cuttlefish spermiogenesis is characterized by a double nuclear protein transition: histones -&gt; spermatid-specific proteins (T1/T2) -&gt; protamines (SP1/SP2). The protamines compact sperm DNA into a highly condensed, stable and inactive complex. The polypeptide is Spermatid-specific protein T1 (Sepia officinalis (Common cuttlefish)).